The following is a 357-amino-acid chain: Histidinol-phosphate aminotransferase 1 (357 aa).

K217 bears the N6-(pyridoxal phosphate)lysine mark.

This sequence belongs to the class-II pyridoxal-phosphate-dependent aminotransferase family. Histidinol-phosphate aminotransferase subfamily. In terms of assembly, homodimer. It depends on pyridoxal 5'-phosphate as a cofactor.

The enzyme catalyses L-histidinol phosphate + 2-oxoglutarate = 3-(imidazol-4-yl)-2-oxopropyl phosphate + L-glutamate. The protein operates within amino-acid biosynthesis; L-histidine biosynthesis; L-histidine from 5-phospho-alpha-D-ribose 1-diphosphate: step 7/9. This Burkholderia lata (strain ATCC 17760 / DSM 23089 / LMG 22485 / NCIMB 9086 / R18194 / 383) protein is Histidinol-phosphate aminotransferase 1.